Reading from the N-terminus, the 121-residue chain is Peptidyl-tRNA hydrolase (121 aa).

This sequence belongs to the PTH2 family.

It is found in the cytoplasm. It catalyses the reaction an N-acyl-L-alpha-aminoacyl-tRNA + H2O = an N-acyl-L-amino acid + a tRNA + H(+). Its function is as follows. The natural substrate for this enzyme may be peptidyl-tRNAs which drop off the ribosome during protein synthesis. This chain is Peptidyl-tRNA hydrolase, found in Sulfurisphaera tokodaii (strain DSM 16993 / JCM 10545 / NBRC 100140 / 7) (Sulfolobus tokodaii).